A 156-amino-acid polypeptide reads, in one-letter code: Ribosome maturation factor RimP (156 aa).

It belongs to the RimP family.

It is found in the cytoplasm. Functionally, required for maturation of 30S ribosomal subunits. The protein is Ribosome maturation factor RimP of Prochlorococcus marinus (strain NATL2A).